The following is a 489-amino-acid chain: Ubiquitin carboxyl-terminal hydrolase 14 (489 aa).

The USP domain maps to 102–458; sequence CGLANLGNTC…SAYVLLYEAR (357 aa). Cys111 (nucleophile) is an active-site residue. Catalysis depends on His409, which acts as the Proton acceptor. The disordered stretch occupies residues 467-489; it reads PPAPVPTEVAADTAEPMEVSEKQ.

It belongs to the peptidase C19 family. USP14/UBP6 subfamily.

The catalysed reaction is Thiol-dependent hydrolysis of ester, thioester, amide, peptide and isopeptide bonds formed by the C-terminal Gly of ubiquitin (a 76-residue protein attached to proteins as an intracellular targeting signal).. Functionally, proteasome-associated deubiquitinase which releases ubiquitin from the proteasome targeted ubiquitinated proteins. Ensures the regeneration of ubiquitin at the proteasome. This chain is Ubiquitin carboxyl-terminal hydrolase 14 (usp-14), found in Caenorhabditis elegans.